The primary structure comprises 282 residues: Homeobox-leucine zipper protein HAT1 (282 aa).

The interval 71–134 is disordered; it reads LEEETGVSSP…EEDYGGETCR (64 aa). The span at 76 to 89 shows a compositional bias: low complexity; it reads GVSSPNSTISSTVS. Residues 132–191 constitute a DNA-binding region (homeobox); the sequence is TCRKKLRLSKDQSAVLEDTFKEHNTLNPKQKLALAKKLGLTARQVEVWFQNRRARTKLKQ. Residues 199–220 form a leucine-zipper region; sequence LKRCVEKLTEENRRLEKEAAEL.

This sequence belongs to the HD-ZIP homeobox family. Class II subfamily. Interacts with BZIP30.

The protein localises to the nucleus. Its function is as follows. Probable transcription factor. The polypeptide is Homeobox-leucine zipper protein HAT1 (HAT1) (Arabidopsis thaliana (Mouse-ear cress)).